We begin with the raw amino-acid sequence, 101 residues long: Small ribosomal subunit protein uS14 (101 aa).

The segment covering methionine 1–glutamate 11 has biased composition (basic and acidic residues). The interval methionine 1 to histidine 20 is disordered.

It belongs to the universal ribosomal protein uS14 family. Part of the 30S ribosomal subunit. Contacts proteins S3 and S10.

In terms of biological role, binds 16S rRNA, required for the assembly of 30S particles and may also be responsible for determining the conformation of the 16S rRNA at the A site. The sequence is that of Small ribosomal subunit protein uS14 from Xanthobacter autotrophicus (strain ATCC BAA-1158 / Py2).